The chain runs to 185 residues: Elongation factor P (185 aa).

The protein belongs to the elongation factor P family.

Its subcellular location is the cytoplasm. The protein operates within protein biosynthesis; polypeptide chain elongation. Involved in peptide bond synthesis. Stimulates efficient translation and peptide-bond synthesis on native or reconstituted 70S ribosomes in vitro. Probably functions indirectly by altering the affinity of the ribosome for aminoacyl-tRNA, thus increasing their reactivity as acceptors for peptidyl transferase. In Alkaliphilus oremlandii (strain OhILAs) (Clostridium oremlandii (strain OhILAs)), this protein is Elongation factor P.